A 428-amino-acid chain; its full sequence is UDP-N-acetylglucosamine 1-carboxyvinyltransferase 2 (428 aa).

22–23 serves as a coordination point for phosphoenolpyruvate; that stretch reads KN. Residue arginine 92 participates in UDP-N-acetyl-alpha-D-glucosamine binding. The Proton donor role is filled by cysteine 116. Cysteine 116 is modified (2-(S-cysteinyl)pyruvic acid O-phosphothioketal). Residues 121-125, aspartate 304, and isoleucine 326 each bind UDP-N-acetyl-alpha-D-glucosamine; that span reads RPIDQ.

It belongs to the EPSP synthase family. MurA subfamily.

Its subcellular location is the cytoplasm. The catalysed reaction is phosphoenolpyruvate + UDP-N-acetyl-alpha-D-glucosamine = UDP-N-acetyl-3-O-(1-carboxyvinyl)-alpha-D-glucosamine + phosphate. It participates in cell wall biogenesis; peptidoglycan biosynthesis. Its function is as follows. Cell wall formation. Adds enolpyruvyl to UDP-N-acetylglucosamine. The chain is UDP-N-acetylglucosamine 1-carboxyvinyltransferase 2 from Geobacillus kaustophilus (strain HTA426).